The sequence spans 226 residues: Ornithine decarboxylase antizyme (226 aa).

The protein belongs to the ODC antizyme family. Interacts with ODC and thereby sterically blocks ODC homodimerization.

Functionally, ornithine decarboxylase (ODC) antizyme protein that negatively regulates ODC activity and intracellular polyamine biosynthesis in response to increased intracellular polyamine levels. Binds to ODC monomers, inhibiting the assembly of the functional ODC homodimer, and targets the monomers for ubiquitin-independent proteolytic destruction by the 26S proteasome. In Schizosaccharomyces pombe (strain 972 / ATCC 24843) (Fission yeast), this protein is Ornithine decarboxylase antizyme (spa1).